We begin with the raw amino-acid sequence, 170 residues long: RNA pyrophosphohydrolase (170 aa).

The 144-residue stretch at 8–151 folds into the Nudix hydrolase domain; it reads PYRPNVGIAL…KKALYAELIP (144 aa). The short motif at 42 to 63 is the Nudix box element; the sequence is GGIDEGETPQVAALREMGEEIG.

The protein belongs to the Nudix hydrolase family. RppH subfamily. The cofactor is a divalent metal cation.

Accelerates the degradation of transcripts by removing pyrophosphate from the 5'-end of triphosphorylated RNA, leading to a more labile monophosphorylated state that can stimulate subsequent ribonuclease cleavage. In Gluconobacter oxydans (strain 621H) (Gluconobacter suboxydans), this protein is RNA pyrophosphohydrolase.